Reading from the N-terminus, the 314-residue chain is MIEFEKPNIHNIEEDARYGKFVVEPLERGYGTTLGNSLRRILLSSLPGAAVNTVQIDGVVHEFSTVDGVVEDVTQIILNLKKVVLAIDSDDERSLEIDIQGPADVTAADLQGGADVEVLNPDLHIATVAAGKSLHMTVTAVKGRGYTSADENKKLRDEMPIGVLAVDSIYTPIERVNYQVENTRIGARDDYDKLTFDIWTNGSIKPSDALSLGAKILAEHLGLFMDISPVAAEASVMVEAEPVAASASDSAPIEDLDLSVRSYNCLKRAGINTIVELTDRTEADMMKVRNLGRKSLDEIQEKLTDMNLGFRKED.

The tract at residues 1 to 228 (MIEFEKPNIH…EHLGLFMDIS (228 aa)) is alpha N-terminal domain (alpha-NTD). The segment at 242–314 (PVAASASDSA…DMNLGFRKED (73 aa)) is alpha C-terminal domain (alpha-CTD).

It belongs to the RNA polymerase alpha chain family. In terms of assembly, homodimer. The RNAP catalytic core consists of 2 alpha, 1 beta, 1 beta' and 1 omega subunit. When a sigma factor is associated with the core the holoenzyme is formed, which can initiate transcription.

The enzyme catalyses RNA(n) + a ribonucleoside 5'-triphosphate = RNA(n+1) + diphosphate. Functionally, DNA-dependent RNA polymerase catalyzes the transcription of DNA into RNA using the four ribonucleoside triphosphates as substrates. The protein is DNA-directed RNA polymerase subunit alpha of Leuconostoc mesenteroides subsp. mesenteroides (strain ATCC 8293 / DSM 20343 / BCRC 11652 / CCM 1803 / JCM 6124 / NCDO 523 / NBRC 100496 / NCIMB 8023 / NCTC 12954 / NRRL B-1118 / 37Y).